Consider the following 602-residue polypeptide: Bifunctional lycopene cyclase/phytoene synthase (602 aa).

Positions 1–238 are lycopene beta-cyclase; the sequence is MLTYMEVHLY…LVFASCATDR (238 aa). Transmembrane regions (helical) follow at residues 7 to 27, 35 to 55, 69 to 89, 110 to 130, 142 to 162, 173 to 193, and 211 to 231; these read VHLYFTLPVLALLAFLYKPFF, YIFLCTVAFATASPWDNYIVY, VIGYVPLEEYMFFIIMTLITV, PVFQSVCVRYIPIVGFLTIAA, PFYGACILWYVCPVLALLWIG, AVLFSIAVPTIFLCWVDQYAI, and LPSLPLEEFLFFLLIDTVLVF. The segment at 245–602 is phytoene synthase; the sequence is IYITPMNHNK…RGKSQAFTVI (358 aa).

In the N-terminal section; belongs to the lycopene beta-cyclase family. It in the C-terminal section; belongs to the phytoene/squalene synthase family.

The protein localises to the membrane. The enzyme catalyses all-trans-lycopene = gamma-carotene. It carries out the reaction gamma-carotene = all-trans-beta-carotene. The catalysed reaction is 2 (2E,6E,10E)-geranylgeranyl diphosphate = 15-cis-phytoene + 2 diphosphate. It functions in the pathway carotenoid biosynthesis; beta-carotene biosynthesis. Its pathway is carotenoid biosynthesis; phytoene biosynthesis; all-trans-phytoene from geranylgeranyl diphosphate: step 1/1. Bifunctional enzyme that catalyzes the reactions from geranylgeranyl diphosphate to phytoene (phytoene synthase) and lycopene to beta-carotene via the intermediate gamma-carotene (lycopene cyclase). The chain is Bifunctional lycopene cyclase/phytoene synthase from Phycomyces blakesleeanus (strain ATCC 8743b / DSM 1359 / FGSC 10004 / NBRC 33097 / NRRL 1555).